The chain runs to 436 residues: Protein MSS51, mitochondrial (436 aa).

Residues M1–L26 constitute a mitochondrion transit peptide. Residues A43–Q66 are disordered.

It belongs to the MSS51 family. Interacts with COX1 and COX14.

Its subcellular location is the mitochondrion inner membrane. Has a dual role in the assembly of cytochrome oxidase subunit 1 (COX1). It has a regulative function on COX1 synthesis, acting as a translational activator specific for the COX1 mRNA, and it also binds to newly synthesized COX1 protein. Together with COX14, may act as a chaperone that binds efficiently unassembled COX1 and prevents it from unproductive aggregation. When bound to COX1, MSS51 is unable to interact with the COX1 mRNA and translation is halted. This may be a feedback control that ensures that COX1 is only produced as long as potentially harmful assembly intermediates are not accumulating. This Saccharomyces cerevisiae (strain ATCC 204508 / S288c) (Baker's yeast) protein is Protein MSS51, mitochondrial (MSS51).